A 283-amino-acid polypeptide reads, in one-letter code: Pantothenate synthetase (283 aa).

An ATP-binding site is contributed by 34–41 (MGALHEGH). H41 acts as the Proton donor in catalysis. A (R)-pantoate-binding site is contributed by Q65. Beta-alanine is bound at residue Q65. 152–155 (GQKD) is an ATP binding site. (R)-pantoate is bound at residue Q158. Residues V181 and 189–192 (MSSR) each bind ATP.

Belongs to the pantothenate synthetase family. In terms of assembly, homodimer.

The protein localises to the cytoplasm. It catalyses the reaction (R)-pantoate + beta-alanine + ATP = (R)-pantothenate + AMP + diphosphate + H(+). Its pathway is cofactor biosynthesis; (R)-pantothenate biosynthesis; (R)-pantothenate from (R)-pantoate and beta-alanine: step 1/1. Catalyzes the condensation of pantoate with beta-alanine in an ATP-dependent reaction via a pantoyl-adenylate intermediate. The protein is Pantothenate synthetase of Nitrobacter winogradskyi (strain ATCC 25391 / DSM 10237 / CIP 104748 / NCIMB 11846 / Nb-255).